A 466-amino-acid polypeptide reads, in one-letter code: MSAIKTRFAPSPTGLIHLGNARTALFSALGGDVFVLRIEDTDLERSRAEFVAELMNDLRWLGLDWQEGPRGAEPDPDWYQSRRGEIYATYYRLLEEKGLAYPCFCTPLELEVSRKVQLGSGRPPRYSGRCAHLPADEVRRRHEEGLAATLRFRVPKDRVVEFEDEVRGPQRFAGEDIGDFIIRRADGSPAFFFCNAIDDALMGITRVLRGEDHLANTPRQLMILAALDLPRPRYAHISLIVGDDGAPLSKRNGSRSIKQLREEGYFPEAVVNMLARLGHHYDSAELLGLPALRAGFDIRRLGRSPARFDVSHLDHWQGLAVRGAADDTLWHWLHTETRAVVPDAHRAGFLDLVRSNCLFPKEADAWARILFTDELELAADIAAVAQAAGEAFYLAAIDAATESPDDFAAFLAGLKRRSGAKGKHLFLPLRAALTGSLDGPELAKIYQMLDKPRLHRRLAEFTYESE.

Residues 10–20 (PSPTGLIHLGN) carry the 'HIGH' region motif. Zn(2+) is bound by residues Cys-103, Cys-105, Cys-130, and His-132. A 'KMSKS' region motif is present at residues 247–251 (PLSKR). Lys-250 lines the ATP pocket.

The protein belongs to the class-I aminoacyl-tRNA synthetase family. Glutamate--tRNA ligase type 1 subfamily. As to quaternary structure, monomer. It depends on Zn(2+) as a cofactor.

Its subcellular location is the cytoplasm. It catalyses the reaction tRNA(Glu) + L-glutamate + ATP = L-glutamyl-tRNA(Glu) + AMP + diphosphate. Functionally, catalyzes the attachment of glutamate to tRNA(Glu) in a two-step reaction: glutamate is first activated by ATP to form Glu-AMP and then transferred to the acceptor end of tRNA(Glu). In Methylococcus capsulatus (strain ATCC 33009 / NCIMB 11132 / Bath), this protein is Glutamate--tRNA ligase 1.